A 405-amino-acid chain; its full sequence is L-rhamnonate dehydratase (405 aa).

Residues His-33 and Arg-59 each contribute to the substrate site. Asp-226, Glu-252, and Glu-280 together coordinate Mg(2+). The active-site Proton acceptor is the His-329. Substrate is bound at residue Glu-349.

It belongs to the mandelate racemase/muconate lactonizing enzyme family. RhamD subfamily. Homooctamer; tetramer of dimers. Requires Mg(2+) as cofactor.

The catalysed reaction is L-rhamnonate = 2-dehydro-3-deoxy-L-rhamnonate + H2O. Catalyzes the dehydration of L-rhamnonate to 2-keto-3-deoxy-L-rhamnonate (KDR). This Shigella boydii serotype 4 (strain Sb227) protein is L-rhamnonate dehydratase.